An 833-amino-acid chain; its full sequence is Transcription factor MBP1 (833 aa).

Positions 5-111 (IYSARYSGVD…FTQTDGSASP (107 aa)) constitute an HTH APSES-type domain. Residues 36-57 (ATHILKAANFAKAKRTRILEKE) constitute a DNA-binding region (H-T-H motif). Disordered stretches follow at residues 104–223 (QTDG…QSPT) and 280–329 (QQSS…SPII). Serine 110 bears the Phosphoserine mark. Positions 115-129 (PKHHHASKVDRKKAI) are enriched in basic residues. The segment covering 139–149 (ETKRNNKKAEE) has biased composition (basic and acidic residues). A compositionally biased stretch (polar residues) spans 201-223 (PNSSISTTQLPSIRSTMGPQSPT). Over residues 280–307 (QQSSLIQTQQTESMATSVSSSPSLPTSP) the composition is skewed to low complexity. Phosphothreonine is present on threonine 325. Serine 326 and serine 330 each carry phosphoserine. ANK repeat units lie at residues 394-423 (ELHTAFHWACSMGNLPIAEALYEAGTSIRS) and 512-541 (NGDTALHIASKNGDVVFFNTLVKMGALTTI). At serine 827 the chain carries Phosphoserine.

Component of the transcription complex MCB-binding factor (MBF) composed of SWI6 and MBP1. Interacts with MSA1.

Its subcellular location is the nucleus. Functionally, binds to MCB elements (Mlu I cell cycle box) found in the promoter of most DNA synthesis genes. Transcriptional activation by MBF has an important role in the transition from G1 to S phase. It may have a dual role in that it behaves as an activator of transcription at the G1-S boundary and as a repressor during other stages of the cell cycle. In Saccharomyces cerevisiae (strain ATCC 204508 / S288c) (Baker's yeast), this protein is Transcription factor MBP1 (MBP1).